Reading from the N-terminus, the 127-residue chain is Small ribosomal subunit protein bS6 (127 aa).

This sequence belongs to the bacterial ribosomal protein bS6 family.

Its function is as follows. Binds together with bS18 to 16S ribosomal RNA. The sequence is that of Small ribosomal subunit protein bS6 from Buchnera aphidicola subsp. Cinara cedri (strain Cc).